A 347-amino-acid chain; its full sequence is Ultraviolet-sensitive opsin (347 aa).

The Extracellular portion of the chain corresponds to 1–37; that stretch reads MSGEEEFYLFKNGSIGGPWDGPQYHIAPPWAFYLQTA. Asn12 is a glycosylation site (N-linked (GlcNAc...) asparagine). Residues 38–58 form a helical membrane-spanning segment; the sequence is FMGFVFMVGTPLNAIVLVVTI. The Cytoplasmic portion of the chain corresponds to 59 to 69; the sequence is KYKKLRQPLNY. The helical transmembrane segment at 70-90 threads the bilayer; the sequence is ILVNISFCGFLACIICIFTVF. Topologically, residues 91–106 are extracellular; that stretch reads VSSSQGYFVFGKHVCA. Cys105 and Cys182 are oxidised to a cystine. A helical membrane pass occupies residues 107-127; sequence FEGFMGATAGLVTGWSLAFLA. Topologically, residues 128–147 are cytoplasmic; the sequence is FERYIVICKPLGNFRFTAKH. Residues 148–168 form a helical membrane-spanning segment; the sequence is ALVVVVATWVIGIGVAIPPFF. The Extracellular segment spans residues 169–197; it reads GWSRYVPEGLQCSCGPDWYTVGTKYRSEY. Residues 198 to 218 traverse the membrane as a helical segment; the sequence is YTWFLFIFCFIVPLSLIIFSY. Residues 219 to 247 are Cytoplasmic-facing; sequence SQLLSALRAVAAQQQESATTQKAEREVSR. The helical transmembrane segment at 248–268 threads the bilayer; that stretch reads MVVVMVGSFCVCYVPYAALAM. Over 269–282 the chain is Extracellular; it reads YMVNNREHGIDLRL. A helical transmembrane segment spans residues 283–303; sequence VTIPAFFSKSSCVYNPIIYCF. Lys291 carries the N6-(retinylidene)lysine modification. Residues 304 to 347 are Cytoplasmic-facing; it reads MNKQFRGCIMEMVCGKPMTDDSDMSSSAQRTEVSSVSSSQVSPS. The S-palmitoyl cysteine moiety is linked to residue Cys317. The segment at 324-347 is disordered; it reads DSDMSSSAQRTEVSSVSSSQVSPS. Residues 328–347 show a composition bias toward low complexity; sequence SSSAQRTEVSSVSSSQVSPS.

It belongs to the G-protein coupled receptor 1 family. Opsin subfamily. Post-translationally, phosphorylated on some or all of the serine and threonine residues present in the C-terminal region. As to expression, cone photoreceptor cells.

Its subcellular location is the membrane. In terms of biological role, visual pigments are the light-absorbing molecules that mediate vision. They consist of an apoprotein, opsin, covalently linked to cis-retinal. In Melopsittacus undulatus (Budgerigar), this protein is Ultraviolet-sensitive opsin.